The primary structure comprises 184 residues: Fungal defensin copsin (184 aa).

A signal peptide spans 1 to 23 (MKLSTSLLAIVAVASTFIGNALS). The propeptide occupies 24-127 (ATTVPGCFAE…LGRVLPVEKR (104 aa)). Glutamine 128 bears the Pyrrolidone carboxylic acid mark. Cystine bridges form between cysteine 130/cysteine 159, cysteine 137/cysteine 167, cysteine 145/cysteine 175, cysteine 149/cysteine 177, cysteine 152/cysteine 184, and cysteine 162/cysteine 181.

Belongs to the invertebrate defensin family. Contains a unique connectivity of 6 cysteine bonds in contrast to most other CS-alpha-beta defensins which are linked by 3 or 4 disulfide bonds. Post-translationally, disulfide bonds are essential for structural integrity and antibacterial activity, since activity is lost after treatment with reducing agents. Thanks to disulfide bonds and N-terminal pyroglutamate, the protein is extremely stable in a wide pH and temperature range and insensitive toward proteases.

The protein resides in the secreted. The protein localises to the target cell membrane. Antimicrobial peptide that acts against Gram-positive bacteria (Listeria spp., Enterococcus spp., B.subtilis, B.anthracis, P.aeruginosa). Is not active against Gram-negative bacteria. It selectively inhibits peptidoglycan biosynthesis through complex formation with the cell wall precursor lipid II (1:1 molar ratio), probably anchoring lipid II to the membrane, thus inhibiting cell wall synthesis. The interaction with lipid II involves the third position of the pentapeptide. Shows bactericidal activity at about 2-fold minimal inhibitory concentrations (MIC), but does not form pore across the membrane. This chain is Fungal defensin copsin, found in Coprinopsis cinerea (Inky cap fungus).